Reading from the N-terminus, the 129-residue chain is Acyl carrier protein 2, chloroplastic (129 aa).

The N-terminal 49 residues, 1 to 49 (MASAAASAVSFARPVKAICVNSVSFSALRKDNVSFRLQPVPQRFSVCCA), are a transit peptide targeting the chloroplast. In terms of domain architecture, Carrier spans 52-127 (KETVEKVCDI…DAANLIDSLV (76 aa)). An O-(pantetheine 4'-phosphoryl)serine modification is found at S87.

This sequence belongs to the acyl carrier protein (ACP) family. Post-translationally, 4'-phosphopantetheine is transferred from CoA to a specific serine of apo-ACP by acpS. This modification is essential for activity because fatty acids are bound in thioester linkage to the sulfhydryl of the prosthetic group.

The protein resides in the plastid. Its subcellular location is the chloroplast. It functions in the pathway lipid metabolism; fatty acid biosynthesis. Carrier of the growing fatty acid chain in fatty acid biosynthesis. This chain is Acyl carrier protein 2, chloroplastic (ACL1.2), found in Hordeum vulgare (Barley).